Here is a 194-residue protein sequence, read N- to C-terminus: Endo-1,4-beta-xylanase (194 aa).

Gly1 bears the N-acetylglycine mark. One can recognise a GH11 domain in the interval Gly1–Ala191. The Nucleophile role is filled by Glu86. Cys110 and Cys154 are oxidised to a cystine. Glu178 functions as the Proton donor in the catalytic mechanism.

It belongs to the glycosyl hydrolase 11 (cellulase G) family.

The enzyme catalyses Endohydrolysis of (1-&gt;4)-beta-D-xylosidic linkages in xylans.. Its pathway is glycan degradation; xylan degradation. This is Endo-1,4-beta-xylanase from Byssochlamys spectabilis (Paecilomyces variotii).